The following is a 422-amino-acid chain: Tyrosine--tRNA ligase (422 aa).

Tyrosine 35 lines the L-tyrosine pocket. A 'HIGH' region motif is present at residues 40-49; the sequence is PTAPSLHLGN. The L-tyrosine site is built by tyrosine 170 and glutamine 174. The short motif at 231–235 is the 'KMSKS' region element; that stretch reads KFGKT. Position 234 (lysine 234) interacts with ATP. The 67-residue stretch at 353-419 folds into the S4 RNA-binding domain; the sequence is APVVDLFAEV…GKKNLAAVEV (67 aa).

This sequence belongs to the class-I aminoacyl-tRNA synthetase family. TyrS type 1 subfamily. Homodimer.

The protein localises to the cytoplasm. It catalyses the reaction tRNA(Tyr) + L-tyrosine + ATP = L-tyrosyl-tRNA(Tyr) + AMP + diphosphate + H(+). Catalyzes the attachment of tyrosine to tRNA(Tyr) in a two-step reaction: tyrosine is first activated by ATP to form Tyr-AMP and then transferred to the acceptor end of tRNA(Tyr). The protein is Tyrosine--tRNA ligase of Streptomyces avermitilis (strain ATCC 31267 / DSM 46492 / JCM 5070 / NBRC 14893 / NCIMB 12804 / NRRL 8165 / MA-4680).